The primary structure comprises 425 residues: 1,4-beta-D-glucan glucohydrolase (425 aa).

The active-site Proton donor is Glu164. The Nucleophile role is filled by Glu349.

Belongs to the glycosyl hydrolase 1 family. Monomer.

The catalysed reaction is Hydrolysis of (1-&gt;4)-linkages in (1-&gt;4)-beta-D-glucans, to remove successive glucose units.. It catalyses the reaction Hydrolysis of terminal, non-reducing beta-D-glucosyl residues with release of beta-D-glucose.. The protein operates within glycan metabolism; cellulose degradation. It participates in glycan metabolism; beta-D-glucan degradation. Its function is as follows. Broad substrate specificity glycosidase. Releases glucose from soluble glucooligomers, with a preference for longer oligomers; acts more readily on cellotetraose than on cellobiose. Displays similar activities towards the disaccharides lactose and cellobiose. Is also able to hydrolyze various aryl-beta-glycosides in vitro. The protein is 1,4-beta-D-glucan glucohydrolase (bglA) of Thermotoga neapolitana.